Reading from the N-terminus, the 470-residue chain is MNVGHVVQVIGVVVDIRFPPGQVPDIYNAIKITSDKEDAFGRKIDLTLEVAQHLGNNTVRTVAMSSTDGLVRGMKAVDTGAPITCPVGRPTLGRLVDVLGQPIDGKGPIISDKRYPIHRPAPPLVEQSTKAEQLETGIKVIDLLVPFLKGGKIGLFGGAGVGKTVIVMELINNIAKQHGGISVFAGVGERTREGNDLYREMTEAGVLDKTTMVFGQMNEPPGARLRVALTGLCLAEYFRDEEGADTLLFIDNIFRFTQAGSEVSALLGRMPSAVGYQPTLATEMGQMQERITSTVKGSVTSVQAVYVPADDLTDPAPATTFAHLDGTVVLSRQIAELGIYPAVDPLDSTSRILDPLVVGNEHYQTARGVQKVLQRYKELQDIIAILGMEELSDDDKLVVARARKLQRFLSQPFHVAEAFTGMSGKFVPIKETIRGFQEILDGKHDDLPEDAFYMVGSIEEAVEKGKKLLG.

An ATP-binding site is contributed by 157–164; that stretch reads GGAGVGKT.

The protein belongs to the ATPase alpha/beta chains family. In terms of assembly, F-type ATPases have 2 components, CF(1) - the catalytic core - and CF(0) - the membrane proton channel. CF(1) has five subunits: alpha(3), beta(3), gamma(1), delta(1), epsilon(1). CF(0) has three main subunits: a(1), b(2) and c(9-12). The alpha and beta chains form an alternating ring which encloses part of the gamma chain. CF(1) is attached to CF(0) by a central stalk formed by the gamma and epsilon chains, while a peripheral stalk is formed by the delta and b chains.

The protein resides in the cell membrane. It carries out the reaction ATP + H2O + 4 H(+)(in) = ADP + phosphate + 5 H(+)(out). Its function is as follows. Produces ATP from ADP in the presence of a proton gradient across the membrane. The catalytic sites are hosted primarily by the beta subunits. This chain is ATP synthase subunit beta, found in Pelotomaculum thermopropionicum (strain DSM 13744 / JCM 10971 / SI).